Consider the following 86-residue polypeptide: Progonadoliberin-2 (86 aa).

The signal sequence occupies residues M1–S24. Residue Q25 is modified to Pyrrolidone carboxylic acid. Position 34 is a glycine amide (G34).

Belongs to the GnRH family.

It is found in the secreted. In terms of biological role, stimulates the secretion of gonadotropins. The protein is Progonadoliberin-2 (gnrh2) of Clarias gariepinus (North African catfish).